A 91-amino-acid polypeptide reads, in one-letter code: Ribonuclease P protein component 4 (91 aa).

The Zn(2+) site is built by cysteine 55, cysteine 58, cysteine 78, and cysteine 81.

The protein belongs to the eukaryotic/archaeal RNase P protein component 4 family. In terms of assembly, consists of a catalytic RNA component and at least 4-5 protein subunits. Requires Zn(2+) as cofactor.

The protein resides in the cytoplasm. The enzyme catalyses Endonucleolytic cleavage of RNA, removing 5'-extranucleotides from tRNA precursor.. Functionally, part of ribonuclease P, a protein complex that generates mature tRNA molecules by cleaving their 5'-ends. The polypeptide is Ribonuclease P protein component 4 (Thermoplasma acidophilum (strain ATCC 25905 / DSM 1728 / JCM 9062 / NBRC 15155 / AMRC-C165)).